The following is a 938-amino-acid chain: Protocadherin gamma-C4 (938 aa).

The signal sequence occupies residues 1–29 (MLRKVRSWTEIWRWATLLFLFYHLGYVCG). 6 Cadherin domains span residues 30–133 (QIRY…APRF), 134–242 (PRQQ…APAF), 243–350 (QQSS…APYI), 351–455 (TVTS…PPSF), 456–565 (FQRS…APAV), and 572–676 (PGSL…VPDL). Over 30-692 (QIRYPVPEES…REGESRLTLY (663 aa)) the chain is Extracellular. Residues Asn265, Asn276, and Asn444 are each glycosylated (N-linked (GlcNAc...) asparagine). Residues 693–713 (LAVSLVAICFVSFGSFVALLS) traverse the membrane as a helical segment. At 714-938 (KCLRGAACGV…KKKSGKKEKK (225 aa)) the chain is on the cytoplasmic side. Disordered regions lie at residues 791–847 (PSAP…WPNN) and 908–938 (ATLTNAAGKRDGKAPAGGNGNKKKSGKKEKK). The segment covering 822 to 847 (WRFSQAQRPGTSGSQNGDDTGTWPNN) has biased composition (polar residues). Positions 928-938 (NKKKSGKKEKK) are enriched in basic residues.

The protein resides in the cell membrane. Functionally, potential calcium-dependent cell-adhesion protein. May be involved in the establishment and maintenance of specific neuronal connections in the brain. The polypeptide is Protocadherin gamma-C4 (PCDHGC4) (Homo sapiens (Human)).